We begin with the raw amino-acid sequence, 269 residues long: Formamidopyrimidine-DNA glycosylase (269 aa).

The Schiff-base intermediate with DNA role is filled by P2. E3 acts as the Proton donor in catalysis. The active-site Proton donor; for beta-elimination activity is K57. The DNA site is built by H90, R109, and R150. The FPG-type zinc-finger motif lies at 235–269 (QVYGKAGEQCPNCAELIQELKIGQRNTFYCSSCQV). Catalysis depends on R259, which acts as the Proton donor; for delta-elimination activity.

It belongs to the FPG family. As to quaternary structure, monomer. Requires Zn(2+) as cofactor.

The catalysed reaction is Hydrolysis of DNA containing ring-opened 7-methylguanine residues, releasing 2,6-diamino-4-hydroxy-5-(N-methyl)formamidopyrimidine.. It carries out the reaction 2'-deoxyribonucleotide-(2'-deoxyribose 5'-phosphate)-2'-deoxyribonucleotide-DNA = a 3'-end 2'-deoxyribonucleotide-(2,3-dehydro-2,3-deoxyribose 5'-phosphate)-DNA + a 5'-end 5'-phospho-2'-deoxyribonucleoside-DNA + H(+). In terms of biological role, involved in base excision repair of DNA damaged by oxidation or by mutagenic agents. Acts as a DNA glycosylase that recognizes and removes damaged bases. Has a preference for oxidized purines, such as 7,8-dihydro-8-oxoguanine (8-oxoG). Has AP (apurinic/apyrimidinic) lyase activity and introduces nicks in the DNA strand. Cleaves the DNA backbone by beta-delta elimination to generate a single-strand break at the site of the removed base with both 3'- and 5'-phosphates. This Vibrio atlanticus (strain LGP32) (Vibrio splendidus (strain Mel32)) protein is Formamidopyrimidine-DNA glycosylase.